A 1379-amino-acid polypeptide reads, in one-letter code: Attractin-like protein 1 (1379 aa).

A disordered region spans residues 1-23; it reads METGGRARTGTPQPAAPGVWRAR. The signal sequence occupies residues 1–52; sequence METGGRARTGTPQPAAPGVWRARPAGGGGGGASSWLLDGNSWLLCYGFLYLA. The EGF-like 1 domain maps to 53-91; that stretch reads LYAQVSQSKPCERTGSCFSGRCVNSTCLCDPGWVGDQCQ. Residues 53 to 1230 are Extracellular-facing; it reads LYAQVSQSKP…FSQHNTIMDL (1178 aa). 3 disulfides stabilise this stretch: cysteine 63–cysteine 79, cysteine 81–cysteine 90, and cysteine 93–cysteine 119. Asparagine 76 is a glycosylation site (N-linked (GlcNAc...) asparagine). Positions 93–209 constitute a CUB domain; sequence CQGRFKLTEP…TGFNIFYSIN (117 aa). Asparagine 174 and asparagine 198 each carry an N-linked (GlcNAc...) asparagine glycan. Positions 207–245 constitute an EGF-like 2 domain; it reads SINSCPNNCSGHGKCTTSVSVPSQVYCECDKYWKGEACD. 3 disulfide bridges follow: cysteine 211–cysteine 221, cysteine 215–cysteine 233, and cysteine 235–cysteine 244. 6 Kelch repeats span residues 316–365, 367–415, 427–475, 480–531, 533–591, and 592–638; these read FMWV…LYQE, IFMY…EGHS, VMII…SVYD, SIYV…LING, MLIF…VING, and SMYI…WNKN. Asparagine 380 carries N-linked (GlcNAc...) asparagine glycosylation. 3 PSI domains span residues 614 to 657, 666 to 709, and 715 to 760; these read NCKA…AKCP, RCYR…TKCH, and ICNK…DACL. The C-type lectin domain maps to 755-873; it reads IGDACLRVNS…TSMANGLVCE (119 aa). N-linked (GlcNAc...) asparagine glycosylation is found at asparagine 763, asparagine 778, and asparagine 898. A disulfide bridge links cysteine 776 with cysteine 872. 2 consecutive PSI domains span residues 889 to 939 and 942 to 1012; these read PCSL…ATCS and NCSG…IQCP. 8 disulfides stabilise this stretch: cysteine 1014-cysteine 1022, cysteine 1016-cysteine 1028, cysteine 1031-cysteine 1040, cysteine 1043-cysteine 1057, cysteine 1060-cysteine 1069, cysteine 1062-cysteine 1076, cysteine 1078-cysteine 1088, and cysteine 1091-cysteine 1106. Laminin EGF-like domains are found at residues 1014–1059 and 1060–1108; these read CQCN…QCTA and CTCS…TCYY. Asparagine 1157 carries N-linked (GlcNAc...) asparagine glycosylation. The helical transmembrane segment at 1231-1251 threads the bilayer; it reads VQFFVTFFSCFLSLLLVAAVV. Over 1252–1379 the chain is Cytoplasmic; sequence WKIKQTCWAS…HLSTRQGTCV (128 aa). A disordered region spans residues 1354–1379; sequence KASDSKDKTSGVRNRKHLSTRQGTCV.

Interacts with MC4R.

The protein localises to the membrane. May play a role in melanocortin signaling pathways that regulate energy homeostasis. The protein is Attractin-like protein 1 (ATRNL1) of Homo sapiens (Human).